A 115-amino-acid polypeptide reads, in one-letter code: Protachykinin-1 (115 aa).

Residues 1 to 19 (MKILVALAVLALVSTQLFA) form the signal peptide. Residues 20-56 (EDIRANDDLNYWSDWSDSDQIKEELPEPFEHLLQRIA) constitute a propeptide that is removed on maturation. A methionine amide mark is found at Met-68 and Met-92.

This sequence belongs to the tachykinin family. Post-translationally, the substance P form is cleaved at Pro-59 by the prolyl endopeptidase FAP (seprase) activity (in vitro). Substance P is also cleaved and degraded by Angiotensin-converting enzyme (ACE) and neprilysin (MME).

The protein localises to the secreted. Functionally, tachykinins are active peptides which excite neurons, evoke behavioral responses, are potent vasodilators and secretagogues, and contract (directly or indirectly) many smooth muscles. The protein is Protachykinin-1 (TAC1) of Oryctolagus cuniculus (Rabbit).